The chain runs to 175 residues: Large ribosomal subunit protein uL10 (175 aa).

Belongs to the universal ribosomal protein uL10 family. As to quaternary structure, part of the ribosomal stalk of the 50S ribosomal subunit. The N-terminus interacts with L11 and the large rRNA to form the base of the stalk. The C-terminus forms an elongated spine to which L12 dimers bind in a sequential fashion forming a multimeric L10(L12)X complex.

In terms of biological role, forms part of the ribosomal stalk, playing a central role in the interaction of the ribosome with GTP-bound translation factors. The sequence is that of Large ribosomal subunit protein uL10 from Cyanothece sp. (strain PCC 7425 / ATCC 29141).